The chain runs to 365 residues: UDP-N-acetylglucosamine--N-acetylmuramyl-(pentapeptide) pyrophosphoryl-undecaprenol N-acetylglucosamine transferase (365 aa).

Residues 17-19 (TGG), Asn129, Arg167, Ser194, Ile250, 269-274 (ALTVSE), and Gln295 each bind UDP-N-acetyl-alpha-D-glucosamine.

This sequence belongs to the glycosyltransferase 28 family. MurG subfamily.

The protein localises to the cell inner membrane. The enzyme catalyses di-trans,octa-cis-undecaprenyl diphospho-N-acetyl-alpha-D-muramoyl-L-alanyl-D-glutamyl-meso-2,6-diaminopimeloyl-D-alanyl-D-alanine + UDP-N-acetyl-alpha-D-glucosamine = di-trans,octa-cis-undecaprenyl diphospho-[N-acetyl-alpha-D-glucosaminyl-(1-&gt;4)]-N-acetyl-alpha-D-muramoyl-L-alanyl-D-glutamyl-meso-2,6-diaminopimeloyl-D-alanyl-D-alanine + UDP + H(+). Its pathway is cell wall biogenesis; peptidoglycan biosynthesis. In terms of biological role, cell wall formation. Catalyzes the transfer of a GlcNAc subunit on undecaprenyl-pyrophosphoryl-MurNAc-pentapeptide (lipid intermediate I) to form undecaprenyl-pyrophosphoryl-MurNAc-(pentapeptide)GlcNAc (lipid intermediate II). This chain is UDP-N-acetylglucosamine--N-acetylmuramyl-(pentapeptide) pyrophosphoryl-undecaprenol N-acetylglucosamine transferase, found in Shewanella halifaxensis (strain HAW-EB4).